The following is a 279-amino-acid chain: Thymidylate synthase (279 aa).

133–134 (RR) contributes to the dUMP binding site. Cysteine 154 functions as the Nucleophile in the catalytic mechanism. Residues 178 to 181 (RSND), asparagine 189, and 219 to 221 (HIY) each bind dUMP. Residue aspartate 181 coordinates (6R)-5,10-methylene-5,6,7,8-tetrahydrofolate. Alanine 278 is a (6R)-5,10-methylene-5,6,7,8-tetrahydrofolate binding site.

It belongs to the thymidylate synthase family. Bacterial-type ThyA subfamily. In terms of assembly, homodimer.

The protein localises to the cytoplasm. It carries out the reaction dUMP + (6R)-5,10-methylene-5,6,7,8-tetrahydrofolate = 7,8-dihydrofolate + dTMP. The protein operates within pyrimidine metabolism; dTTP biosynthesis. Its function is as follows. Catalyzes the reductive methylation of 2'-deoxyuridine-5'-monophosphate (dUMP) to 2'-deoxythymidine-5'-monophosphate (dTMP) while utilizing 5,10-methylenetetrahydrofolate (mTHF) as the methyl donor and reductant in the reaction, yielding dihydrofolate (DHF) as a by-product. This enzymatic reaction provides an intracellular de novo source of dTMP, an essential precursor for DNA biosynthesis. The protein is Thymidylate synthase of Streptococcus pyogenes serotype M6 (strain ATCC BAA-946 / MGAS10394).